A 307-amino-acid polypeptide reads, in one-letter code: Myeloid-associated differentiation marker-like protein 2 (307 aa).

MARVEL domains lie at 17-154 (AVTS…ARPG) and 159-303 (YMAT…RIRF). 7 consecutive transmembrane segments (helical) span residues 53–73 (FCMAAWGFCFAFSVLVVACEF), 90–110 (AFAMLATLLCATAAVIYPLYF), 129–149 (LAASVFAGLLFLAYAAEVALT), 163–183 (VSGLLKIVQAFVACIIFGALV), 198–218 (VAVYSLCFMATVAVVVLSVMG), 232–252 (VVYTFLAVLLYLSAAVIWPVF), and 278–298 (LVVAIFTYVNLLLYIVDLAYS).

It belongs to the MAL family.

The protein resides in the membrane. This chain is Myeloid-associated differentiation marker-like protein 2 (Myadml2), found in Rattus norvegicus (Rat).